Consider the following 627-residue polypeptide: DNA mismatch repair protein MutL (627 aa).

The disordered stretch occupies residues 376 to 404; that stretch reads APASTNEVREGSAARAGNYQPPEPPSREA.

Belongs to the DNA mismatch repair MutL/HexB family.

Its function is as follows. This protein is involved in the repair of mismatches in DNA. It is required for dam-dependent methyl-directed DNA mismatch repair. May act as a 'molecular matchmaker', a protein that promotes the formation of a stable complex between two or more DNA-binding proteins in an ATP-dependent manner without itself being part of a final effector complex. This chain is DNA mismatch repair protein MutL, found in Aeromonas salmonicida (strain A449).